We begin with the raw amino-acid sequence, 465 residues long: UDP-N-acetylmuramoylalanine--D-glutamate ligase (465 aa).

Residue 112–118 coordinates ATP; the sequence is GTDGKTT.

This sequence belongs to the MurCDEF family.

Its subcellular location is the cytoplasm. The catalysed reaction is UDP-N-acetyl-alpha-D-muramoyl-L-alanine + D-glutamate + ATP = UDP-N-acetyl-alpha-D-muramoyl-L-alanyl-D-glutamate + ADP + phosphate + H(+). It functions in the pathway cell wall biogenesis; peptidoglycan biosynthesis. Its function is as follows. Cell wall formation. Catalyzes the addition of glutamate to the nucleotide precursor UDP-N-acetylmuramoyl-L-alanine (UMA). The chain is UDP-N-acetylmuramoylalanine--D-glutamate ligase from Chlorobium limicola (strain DSM 245 / NBRC 103803 / 6330).